Here is a 287-residue protein sequence, read N- to C-terminus: ATP synthase subunit a (287 aa).

The next 6 helical transmembrane spans lie at 37-57 (LDSV…MWLA), 96-116 (FIAP…AMDL), 149-169 (LGLS…IKGL), 187-207 (PVFA…EYVA), 224-244 (ELVF…LSGV), and 266-286 (TLQA…AHEA).

The protein belongs to the ATPase A chain family. As to quaternary structure, F-type ATPases have 2 components, CF(1) - the catalytic core - and CF(0) - the membrane proton channel. CF(1) has five subunits: alpha(3), beta(3), gamma(1), delta(1), epsilon(1). CF(0) has three main subunits: a(1), b(2) and c(9-12). The alpha and beta chains form an alternating ring which encloses part of the gamma chain. CF(1) is attached to CF(0) by a central stalk formed by the gamma and epsilon chains, while a peripheral stalk is formed by the delta and b chains.

The protein resides in the cell inner membrane. Key component of the proton channel; it plays a direct role in the translocation of protons across the membrane. This is ATP synthase subunit a from Acidovorax sp. (strain JS42).